A 413-amino-acid polypeptide reads, in one-letter code: Histidine--tRNA ligase (413 aa).

This sequence belongs to the class-II aminoacyl-tRNA synthetase family. In terms of assembly, homodimer.

The protein resides in the cytoplasm. It carries out the reaction tRNA(His) + L-histidine + ATP = L-histidyl-tRNA(His) + AMP + diphosphate + H(+). This is Histidine--tRNA ligase from Fusobacterium nucleatum subsp. nucleatum (strain ATCC 25586 / DSM 15643 / BCRC 10681 / CIP 101130 / JCM 8532 / KCTC 2640 / LMG 13131 / VPI 4355).